The primary structure comprises 134 residues: MKPGEIIVKRTEIEVNQGHNATILNVKNTGDRPIQVGSHYHFFEANPALQFDHEKAYGKRLDIPAGAAVRFEPGDEKEVQLVEYSGKRKIYGFHGDVNGSIDESRVYKLEDDSTATEVIAEQDKTSENANKGRG.

It belongs to the urease beta subunit family. In terms of assembly, heterotrimer of UreA (gamma), UreB (beta) and UreC (alpha) subunits. Three heterotrimers associate to form the active enzyme.

The protein localises to the cytoplasm. The catalysed reaction is urea + 2 H2O + H(+) = hydrogencarbonate + 2 NH4(+). It participates in nitrogen metabolism; urea degradation; CO(2) and NH(3) from urea (urease route): step 1/1. In Staphylococcus saprophyticus subsp. saprophyticus (strain ATCC 15305 / DSM 20229 / NCIMB 8711 / NCTC 7292 / S-41), this protein is Urease subunit beta.